A 304-amino-acid chain; its full sequence is Non-specific ribonucleoside hydrolase RihC (304 aa).

His233 is an active-site residue.

It belongs to the IUNH family. RihC subfamily.

Its function is as follows. Hydrolyzes both purine and pyrimidine ribonucleosides with a broad-substrate specificity. This is Non-specific ribonucleoside hydrolase RihC from Escherichia coli O127:H6 (strain E2348/69 / EPEC).